The primary structure comprises 338 residues: Heat-inducible transcription repressor HrcA (338 aa).

This sequence belongs to the HrcA family.

Its function is as follows. Negative regulator of class I heat shock genes (grpE-dnaK-dnaJ and groELS operons). Prevents heat-shock induction of these operons. The sequence is that of Heat-inducible transcription repressor HrcA from Bacillus cereus (strain AH820).